Here is a 224-residue protein sequence, read N- to C-terminus: Phosphoribosyltransferase domain-containing protein 1 (224 aa).

Mg(2+)-binding residues include Glu140 and Asp141. Residues 140–148, Lys172, 193–194, and Asp200 each bind GMP; these read EDIINTGRT and FV. Asp200 contributes to the Mg(2+) binding site.

It belongs to the purine/pyrimidine phosphoribosyltransferase family.

This is Phosphoribosyltransferase domain-containing protein 1 (prtfdc1) from Xenopus laevis (African clawed frog).